Here is a 330-residue protein sequence, read N- to C-terminus: Peroxidase 55 (330 aa).

Positions 1 to 30 are cleaved as a signal peptide; that stretch reads MDIRSDDAKKPMMMWFLGMLLFSMVAESNA. Intrachain disulfides connect cysteine 41-cysteine 121, cysteine 74-cysteine 79, cysteine 127-cysteine 326, and cysteine 206-cysteine 238. Residue histidine 72 is the Proton acceptor of the active site. Aspartate 73, valine 76, glycine 78, aspartate 80, and serine 82 together coordinate Ca(2+). Proline 169 is a substrate binding site. Position 199 (histidine 199) interacts with heme b. Threonine 200 lines the Ca(2+) pocket. Asparagine 215 is a glycosylation site (N-linked (GlcNAc...) asparagine). Positions 250, 253, and 258 each coordinate Ca(2+).

It belongs to the peroxidase family. Classical plant (class III) peroxidase subfamily. Requires heme b as cofactor. Ca(2+) serves as cofactor. As to expression, slightly expressed in roots.

It is found in the secreted. The enzyme catalyses 2 a phenolic donor + H2O2 = 2 a phenolic radical donor + 2 H2O. Its function is as follows. Removal of H(2)O(2), oxidation of toxic reductants, biosynthesis and degradation of lignin, suberization, auxin catabolism, response to environmental stresses such as wounding, pathogen attack and oxidative stress. These functions might be dependent on each isozyme/isoform in each plant tissue. The polypeptide is Peroxidase 55 (PER55) (Arabidopsis thaliana (Mouse-ear cress)).